The chain runs to 386 residues: Mannitol-1-phosphate 5-dehydrogenase (386 aa).

Residue 4–15 (AVHFGAGNIGRG) participates in NAD(+) binding.

Belongs to the mannitol dehydrogenase family.

It carries out the reaction D-mannitol 1-phosphate + NAD(+) = beta-D-fructose 6-phosphate + NADH + H(+). The protein is Mannitol-1-phosphate 5-dehydrogenase of Oceanobacillus iheyensis (strain DSM 14371 / CIP 107618 / JCM 11309 / KCTC 3954 / HTE831).